We begin with the raw amino-acid sequence, 152 residues long: ASP external chaperone (152 aa).

The first 22 residues, 1-22 (MNKPVTLLLATLLAPLSGQLCA), serve as a signal peptide directing secretion.

In terms of assembly, forms a complex with the serine protease ASP in the periplasm. After translocation of the ASP-ORF2 complex from the periplasm to the extracellular space, the complex is dissociated in a pH-dependent manner.

It localises to the periplasm. It is found in the secreted. With respect to regulation, degraded by ASP after secretion and dissociation of the ASP-ORF2 complex. Functionally, required for the production of the active form of the Aeromonas extracellular serine protease (ASP). Acts as a chaperone that helps ASP form an active structure in the periplasm. Formation of a complex with ASP in the periplasm also inactivates the protease activity and likely protects ASP from intrinsic proteases. Dissociation of the ASP-ORF2 complex after secretion in the extracellular space generates an active ASP. The protein is ASP external chaperone of Aeromonas sobria.